A 548-amino-acid polypeptide reads, in one-letter code: Natural resistance-associated macrophage protein 1 (548 aa).

Positions 1 to 38 (MPGDMGPPKQGGTRYGSISSPPSPGPQQAPPGGTYLSE) are disordered. Topologically, residues 1-55 (MPGDMGPPKQGGTRYGSISSPPSPGPQQAPPGGTYLSEKIPIPDTESGAFSLRKL) are cytoplasmic. The chain crosses the membrane as a helical span at residues 56-73 (WAFTGPGFLMSIAFLDPG). Topologically, residues 74-82 (NIESDLQAG) are extracellular. The helical transmembrane segment at 83–102 (AVAGFKLLWVLLWATVLGLL) threads the bilayer. At 103-139 (CQRLAARLGVVTGKDLGEVCHLYYPKVPRILLWLTIE) the chain is on the cytoplasmic side. Residues 140–160 (LAIVGSDMQEVIGTAIAFSLL) form a helical membrane-spanning segment. Residues 161-164 (SAGR) lie on the Extracellular side of the membrane. Residues 165-184 (IPLWGGVLITIVDTFFFLFL) traverse the membrane as a helical segment. Residues 185–193 (DNYGLRKLE) lie on the Cytoplasmic side of the membrane. Residues 194 to 214 (AFFGFLITIMALTFGYEYVVA) form a helical membrane-spanning segment. The Extracellular segment spans residues 215-237 (RPAQGALLQGLFLPSCAGCGQPE). A helical transmembrane segment spans residues 238 to 256 (LLQAVGIVGAIIMPHNIYL). Residues 257–284 (HSSLVKSREVDRSRRADIREANMYFLIE) are Cytoplasmic-facing. Residues 285-304 (ATIALSVSFLINLFVMAVFG) form a helical membrane-spanning segment. Residues 305–346 (QAFYKQTNQAAFNICANSSLHDYATIFPRNNLTVAVDIYQGG) are Extracellular-facing. N-linked (GlcNAc...) asparagine glycosylation is found at Asn321 and Asn335. The chain crosses the membrane as a helical span at residues 347–366 (VILGCLFGPAALYIWAVGLL). The Cytoplasmic segment spans residues 367–397 (AAGQSSTMTGTYAGQFVMEGFLKLRWSRFAR). The chain crosses the membrane as a helical span at residues 398 to 415 (VLLTRSCAILPTVLVAVF). Topologically, residues 416-426 (RDLRDLSGLND) are extracellular. The helical transmembrane segment at 427–447 (LLNVLQSLLLPFAVLPILTFT) threads the bilayer. The Cytoplasmic portion of the chain corresponds to 448–463 (SMPAVMQEFANGLVSK). Residues 464–485 (VISSSIMVLVCAVNLYFVISYV) traverse the membrane as a helical segment. Residues 486-493 (PSLPHPDY) are Extracellular-facing. Residues 494-513 (FSLVALLAAAYLGLTTYLVW) traverse the membrane as a helical segment. Residues 514-548 (TCLITQGATLLAHSSHQRFLYGLPEEDQENGRTSG) are Cytoplasmic-facing.

This sequence belongs to the NRAMP family.

Its subcellular location is the late endosome membrane. The protein localises to the lysosome membrane. The catalysed reaction is Zn(2+)(in) + H(+)(out) = Zn(2+)(out) + H(+)(in). It catalyses the reaction Fe(2+)(in) + H(+)(out) = Fe(2+)(out) + H(+)(in). The enzyme catalyses Mn(2+)(in) + H(+)(out) = Mn(2+)(out) + H(+)(in). Macrophage-specific antiporter that fluxes metal ions in either direction against a proton gradient. Localized to late endosomal lysosomal membranes, delivers bivalent cations from the cytosol into these acidic compartments where they may directly affect antimicrobial activity. Involved in iron metabolism and host natural resistance to infection with intracellular parasites. Pathogen resistance involves sequestration of Fe(2+) and Mn(2+), cofactors of both prokaryotic and eukaryotic catalases and superoxide dismutases, not only to protect the macrophage against its own generation of reactive oxygen species, but to deny the cations to the pathogen for synthesis of its protective enzymes. In Cervus elaphus (Red deer), this protein is Natural resistance-associated macrophage protein 1 (SLC11A1).